A 194-amino-acid polypeptide reads, in one-letter code: Phosphoheptose isomerase (194 aa).

Residues I37–V194 form the SIS domain. A substrate-binding site is contributed by N52 to G54. Positions 61 and 65 each coordinate Zn(2+). Residues E65, N93–D94, S119–S121, S124, and Q172 each bind substrate. The Zn(2+) site is built by Q172 and H180.

The protein belongs to the SIS family. GmhA subfamily. As to quaternary structure, homotetramer. Zn(2+) serves as cofactor.

Its subcellular location is the cytoplasm. It catalyses the reaction 2 D-sedoheptulose 7-phosphate = D-glycero-alpha-D-manno-heptose 7-phosphate + D-glycero-beta-D-manno-heptose 7-phosphate. Its pathway is carbohydrate biosynthesis; D-glycero-D-manno-heptose 7-phosphate biosynthesis; D-glycero-alpha-D-manno-heptose 7-phosphate and D-glycero-beta-D-manno-heptose 7-phosphate from sedoheptulose 7-phosphate: step 1/1. Catalyzes the isomerization of sedoheptulose 7-phosphate in D-glycero-D-manno-heptose 7-phosphate. The protein is Phosphoheptose isomerase of Actinobacillus succinogenes (strain ATCC 55618 / DSM 22257 / CCUG 43843 / 130Z).